A 620-amino-acid polypeptide reads, in one-letter code: Cell fusion protein cfr1 (620 aa).

In terms of domain architecture, Fibronectin type-III spans 79-169; that stretch reads LPSPPVLKLK…KHITIKTLRM (91 aa). A BRCT domain is found at 167-256; that stretch reads LRMIDLTGIQ…RLVNVSGFYI (90 aa). 2 disordered regions span residues 287–566 and 588–620; these read QPKN…PEKA and KQSS…VNID. Positions 303–314 are enriched in polar residues; sequence APQQTTQQGTQN. Over residues 315 to 330 the composition is skewed to low complexity; it reads SANAEPSSSASVPAEA. The segment covering 352–375 has biased composition (polar residues); it reads SKPNEAPTSSENIKADQPENSTKQ. Residues 382–392 are compositionally biased toward basic and acidic residues; the sequence is MQIKDAEEHSN. Positions 393 to 406 are enriched in polar residues; that stretch reads LESTPAAQQTSEVE. Low complexity predominate over residues 424–434; the sequence is NVNEENNTPET. The span at 445–468 shows a compositional bias: polar residues; the sequence is NTAAESLINQEETTSGEAVTKSTV. Residues 472–484 are compositionally biased toward acidic residues; sequence ANEEEAEPNEIIE. Residues 506-515 are compositionally biased toward polar residues; the sequence is NNANSENANG. The segment covering 517–537 has biased composition (basic and acidic residues); the sequence is TDEKIIEAPLDTKENSDDDKP.

The protein belongs to the CHS5 family.

The protein resides in the golgi apparatus. Its function is as follows. Required for cell fusion, independently of fus1. Appears to have a role in transporting proteins that are involved in mating. May act as a scaffold to retain cell fusion proteins in the cisternae of the Golgi. Degraded at the onset of mating and this leads to release of cell fusion proteins. In Schizosaccharomyces pombe (strain 972 / ATCC 24843) (Fission yeast), this protein is Cell fusion protein cfr1 (cfr1).